The following is a 567-amino-acid chain: Glucose-6-phosphate isomerase, cytosolic A (567 aa).

D-glucose 6-phosphate contacts are provided by residues 156–157 (GS), 212–217 (SKTFTT), glutamine 356, glutamate 360, histidine 391, and lysine 516. Glutamate 360 functions as the Proton donor in the catalytic mechanism. Active-site residues include histidine 391 and lysine 516.

The protein belongs to the GPI family. Homodimer.

The protein resides in the cytoplasm. It catalyses the reaction alpha-D-glucose 6-phosphate = beta-D-fructose 6-phosphate. It functions in the pathway carbohydrate degradation; glycolysis; D-glyceraldehyde 3-phosphate and glycerone phosphate from D-glucose: step 2/4. Catalyzes the conversion of glucose-6-phosphate to fructose-6-phosphate, the second step in glycolysis, and the reverse reaction during gluconeogenesis. The sequence is that of Glucose-6-phosphate isomerase, cytosolic A from Oryza sativa subsp. japonica (Rice).